A 225-amino-acid chain; its full sequence is ATP-dependent dethiobiotin synthetase BioD 1 (225 aa).

Mg(2+) contacts are provided by E13 and T17. 13 to 18 (EVGKTV) is a binding site for ATP. The active site involves K38. S42 is a binding site for substrate. The Mg(2+) site is built by D55 and E116. ATP is bound by residues D55, 116–119 (EGAG), and 176–177 (ND). Y188 is a substrate binding site. ATP is bound by residues 205–207 (PWL) and E212.

This sequence belongs to the dethiobiotin synthetase family. In terms of assembly, homodimer. Mg(2+) serves as cofactor.

The protein localises to the cytoplasm. It catalyses the reaction (7R,8S)-7,8-diammoniononanoate + CO2 + ATP = (4R,5S)-dethiobiotin + ADP + phosphate + 3 H(+). Its pathway is cofactor biosynthesis; biotin biosynthesis; biotin from 7,8-diaminononanoate: step 1/2. Functionally, catalyzes a mechanistically unusual reaction, the ATP-dependent insertion of CO2 between the N7 and N8 nitrogen atoms of 7,8-diaminopelargonic acid (DAPA, also called 7,8-diammoniononanoate) to form a ureido ring. Only CTP can partially replace ATP while diaminobiotin is only 37% as effective as 7,8-diaminopelargonic acid. In another study both CTP and GTP (but not ITP, TTP or UTP) can partially replace ATP. The protein is ATP-dependent dethiobiotin synthetase BioD 1 of Escherichia coli (strain K12).